Consider the following 133-residue polypeptide: Large-conductance mechanosensitive channel (133 aa).

The next 2 helical transmembrane spans lie at 14–34 (VVDL…VTTL) and 73–93 (FITV…MVVV).

It belongs to the MscL family. Homopentamer.

Its subcellular location is the cell membrane. Functionally, channel that opens in response to stretch forces in the membrane lipid bilayer. May participate in the regulation of osmotic pressure changes within the cell. The protein is Large-conductance mechanosensitive channel of Renibacterium salmoninarum (strain ATCC 33209 / DSM 20767 / JCM 11484 / NBRC 15589 / NCIMB 2235).